The following is an 858-amino-acid chain: Ubiquitin carboxyl-terminal hydrolase 5 (858 aa).

A2 is modified (N-acetylalanine). Residues 74–96 are disordered; the sequence is RRTRRPKEEDPTTGTGDPPRKKP. K113 is covalently cross-linked (Glycyl lysine isopeptide (Lys-Gly) (interchain with G-Cter in SUMO)). Phosphoserine is present on residues S149 and S156. The UBP-type; degenerate zinc-finger motif lies at 175 to 283; it reads QVSKHAFSLK…EHLSHFGIDM (109 aa). A disulfide bridge links C195 with C816. Residues C199 and C202 each coordinate Zn(2+). W209 lines the substrate pocket. C219 lines the Zn(2+) pocket. 221–224 lines the substrate pocket; it reads RRYF. Residue H232 coordinates Zn(2+). Substrate is bound by residues Y259, Y261, and D264. T292 is modified (phosphothreonine). The region spanning 326–856 is the USP domain; that stretch reads TGIRNLGNSC…LGYIYFYQRV (531 aa). C335 (nucleophile) is an active-site residue. A Phosphothreonine modification is found at T623. 2 consecutive UBA domains span residues 654–695 and 722–762; these read MLDE…VMSH and PPPE…IFSH. A phosphoserine mark is found at S779, S783, and S785. The active-site Proton acceptor is H818.

This sequence belongs to the peptidase C19 family. Homodimer. Interacts with TRIML1. Post-translationally, ubiquitinated by SMURF1; leading to proteasomal degradation. SUMOylated at Lys-113; SUMOylation affects the interaction with Cav3.2 channels.

Its subcellular location is the cytoplasm. The protein resides in the stress granule. It is found in the nucleus. The enzyme catalyses Thiol-dependent hydrolysis of ester, thioester, amide, peptide and isopeptide bonds formed by the C-terminal Gly of ubiquitin (a 76-residue protein attached to proteins as an intracellular targeting signal).. Its function is as follows. Deubiquitinating enzyme that participates in a wide range of cellular processes by specifically cleaving isopeptide bonds between ubiquitin and substrate proteins or ubiquitin itself. Affects thereby important cellular signaling pathways such as NF-kappa-B, Wnt/beta-catenin, and cytokine production by regulating ubiquitin-dependent protein degradation. Participates in the activation of the Wnt signaling pathway by promoting FOXM1 deubiquitination and stabilization that induces the recruitment of beta-catenin to Wnt target gene promoter. Regulates the assembly and disassembly of heat-induced stress granules by mediating the hydrolysis of unanchored ubiquitin chains. Promotes lipopolysaccharide-induced apoptosis and inflammatory response by stabilizing the TXNIP protein. Affects T-cell biology by stabilizing the inhibitory receptor on T-cells PDC1. Acts as a negative regulator of autophagy by regulating ULK1 at both protein and mRNA levels. Acts also as a negative regulator of type I interferon production by simultaneously removing both 'Lys-48'-linked unanchored and 'Lys-63'-linked anchored polyubiquitin chains on the transcription factor IRF3. Modulates the stability of DNA mismatch repair protein MLH1 and counteracts the effect of the ubiquitin ligase UBR4. Upon activation by insulin, it gets phosphorylated through mTORC1-mediated phosphorylation to enhance YTHDF1 stability by removing 'Lys-11'-linked polyubiquitination. May also deubiquitinate other substrates such as the calcium channel CACNA1H. The protein is Ubiquitin carboxyl-terminal hydrolase 5 (UBP5) of Pongo abelii (Sumatran orangutan).